A 250-amino-acid chain; its full sequence is MAQVNMRDLLKAGAHFGHQTRYWNPKMSKFIFGARNKIHIINLEQTVPAMNEALNFIQSLAENKNKILFVGTKRAASKIIKEEAQRSGQPYVNHRWLGGMLTNYKTIRQSIRRYRDLEAQSQDGTFDKLTKKEALERTREMDKLERSIGGIKDMGGLPDALFVIDVDHERIAIKEANKLGIPVIGVVDTNSDPDGVDYVIPGNDDAIRAIQIYVKAVADTCLEASQSAGAGADEFVEVSEDAAGAAPAAE.

Belongs to the universal ribosomal protein uS2 family.

In Marinobacter nauticus (strain ATCC 700491 / DSM 11845 / VT8) (Marinobacter aquaeolei), this protein is Small ribosomal subunit protein uS2.